The primary structure comprises 409 residues: Pleckstrin homology domain-containing family O member 1 (409 aa).

The interval 1–20 is disordered; it reads MMKKNNSTKRGPQDGNHQCA. Positions 21–132 constitute a PH domain; the sequence is PPEKVGWVRK…WINALNSAIT (112 aa). An interaction with capping proteins (CPs) region spans residues 133-193; sequence RAKNRVLDEV…MLTLDLIQEE (61 aa). The interval 136–308 is interaction with ATM, CKIP, IFP35 and NMI; that stretch reads NRVLDEVTVE…PHAPGQLSRI (173 aa). Disordered stretches follow at residues 218–304, 325–350, and 390–409; these read LAGS…APGQ, EVQGLGDGKRKAKEPPRSPPDSESEQ, and TPDSHLRQTTQHSQYRKSLM. Ser-227 and Ser-271 each carry phosphoserine. The segment at 308–409 is negative regulator of AP-1 activity; that stretch reads IQDLVARKLE…QHSQYRKSLM (102 aa). Residues 331 to 340 show a composition bias toward basic and acidic residues; that stretch reads DGKRKAKEPP. Position 342 is a phosphoserine (Ser-342). The span at 390–402 shows a compositional bias: polar residues; that stretch reads TPDSHLRQTTQHS.

Heterodimer or homodimer. Interacts with CK2 and actin capping subunits (capping protein CP-alpha and CP-beta). CKIP1 and CK2 together inhibit the activity of actin capping protein at the barbed ends of actin filaments. Interacts with ATM, IFP35, JUN, JUND, NMI and PI3K. Interacts with AKT1, AKT2 and AKT3 (each isozyme of PKB), PtdIns(3,5)P2, PtdIns(4,5)P2 and PtdIns(3,4,5)P2. Post-translationally, C-terminal fragments could be released during apoptosis via caspase-3-dependent cleavage.

The protein localises to the membrane. Its subcellular location is the nucleus. It localises to the cytoplasm. Functionally, plays a role in the regulation of the actin cytoskeleton through its interactions with actin capping protein (CP). May function to target CK2 to the plasma membrane thereby serving as an adapter to facilitate the phosphorylation of CP by protein kinase 2 (CK2). Appears to target ATM to the plasma membrane. Also implicated in PI3K-regulated muscle differentiation, the regulation of AP-1 activity (plasma membrane bound AP-1 regulator that translocates to the nucleus) and the promotion of apoptosis induced by tumor necrosis factor TNF. When bound to PKB, it inhibits it probably by decreasing PKB level of phosphorylation. In Bos taurus (Bovine), this protein is Pleckstrin homology domain-containing family O member 1 (PLEKHO1).